The chain runs to 85 residues: Translation initiation factor IF-1 1 (85 aa).

The region spanning 1–72 (MAKEELIEMS…SKGRITFRHL (72 aa)) is the S1-like domain.

It belongs to the IF-1 family. Component of the 30S ribosomal translation pre-initiation complex which assembles on the 30S ribosome in the order IF-2 and IF-3, IF-1 and N-formylmethionyl-tRNA(fMet); mRNA recruitment can occur at any time during PIC assembly.

The protein resides in the cytoplasm. Functionally, one of the essential components for the initiation of protein synthesis. Stabilizes the binding of IF-2 and IF-3 on the 30S subunit to which N-formylmethionyl-tRNA(fMet) subsequently binds. Helps modulate mRNA selection, yielding the 30S pre-initiation complex (PIC). Upon addition of the 50S ribosomal subunit IF-1, IF-2 and IF-3 are released leaving the mature 70S translation initiation complex. The polypeptide is Translation initiation factor IF-1 1 (Aromatoleum aromaticum (strain DSM 19018 / LMG 30748 / EbN1) (Azoarcus sp. (strain EbN1))).